A 163-amino-acid chain; its full sequence is Small ribosomal subunit protein uS7 (163 aa).

This sequence belongs to the universal ribosomal protein uS7 family. Part of the 30S ribosomal subunit. Contacts proteins S9 and S11.

Its function is as follows. One of the primary rRNA binding proteins, it binds directly to 16S rRNA where it nucleates assembly of the head domain of the 30S subunit. Is located at the subunit interface close to the decoding center, probably blocks exit of the E-site tRNA. The protein is Small ribosomal subunit protein uS7 of Rickettsia bellii (strain RML369-C).